The sequence spans 248 residues: Ribonuclease PH (248 aa).

Residues Arg-86 and 124–126 (GTR) each bind phosphate.

The protein belongs to the RNase PH family. As to quaternary structure, homohexameric ring arranged as a trimer of dimers.

It catalyses the reaction tRNA(n+1) + phosphate = tRNA(n) + a ribonucleoside 5'-diphosphate. Functionally, phosphorolytic 3'-5' exoribonuclease that plays an important role in tRNA 3'-end maturation. Removes nucleotide residues following the 3'-CCA terminus of tRNAs; can also add nucleotides to the ends of RNA molecules by using nucleoside diphosphates as substrates, but this may not be physiologically important. Probably plays a role in initiation of 16S rRNA degradation (leading to ribosome degradation) during starvation. The sequence is that of Ribonuclease PH from Clostridium kluyveri (strain NBRC 12016).